The primary structure comprises 140 residues: Nucleoside diphosphate kinase (140 aa).

ATP-binding residues include lysine 11, phenylalanine 59, arginine 87, threonine 93, arginine 104, and asparagine 114. The active-site Pros-phosphohistidine intermediate is histidine 117.

This sequence belongs to the NDK family. Homotetramer. Requires Mg(2+) as cofactor.

The protein resides in the cytoplasm. The enzyme catalyses a 2'-deoxyribonucleoside 5'-diphosphate + ATP = a 2'-deoxyribonucleoside 5'-triphosphate + ADP. It catalyses the reaction a ribonucleoside 5'-diphosphate + ATP = a ribonucleoside 5'-triphosphate + ADP. Major role in the synthesis of nucleoside triphosphates other than ATP. The ATP gamma phosphate is transferred to the NDP beta phosphate via a ping-pong mechanism, using a phosphorylated active-site intermediate. This is Nucleoside diphosphate kinase from Mesorhizobium japonicum (strain LMG 29417 / CECT 9101 / MAFF 303099) (Mesorhizobium loti (strain MAFF 303099)).